Here is a 311-residue protein sequence, read N- to C-terminus: Olfactory receptor 1L4 (311 aa).

Over 1-26 the chain is Extracellular; it reads METKNYSSSTSGFILLGLSSNPKLQK. N-linked (GlcNAc...) asparagine glycosylation occurs at asparagine 5. A helical membrane pass occupies residues 27–50; the sequence is PLFAIFLIMYLLTAVGNVLIILAI. The Cytoplasmic segment spans residues 51-58; the sequence is YSDPRLHT. Residues 59–80 traverse the membrane as a helical segment; the sequence is PMYFFLSNLSFMDICFTTVIVP. Residues 81–101 lie on the Extracellular side of the membrane; it reads KMLVNFLSETKIISYVGCLIQ. Cysteine 98 and cysteine 190 are joined by a disulfide. A helical transmembrane segment spans residues 102–121; that stretch reads MYFFMAFGNTDSYLLASMAI. Over 122–140 the chain is Cytoplasmic; the sequence is DRLVAICNPLHYDVVMKPW. A helical membrane pass occupies residues 141-159; that stretch reads HCLLMLLGSCSISHLHSLF. Over 160–197 the chain is Extracellular; the sequence is RVLLMSRLSFCASHIIKHFFCDTQPVLKLSCSDTSSSQ. The helical transmembrane segment at 198-220 threads the bilayer; the sequence is MVVMTETLAVIVTPFLCTIFSYL. Over 221-237 the chain is Cytoplasmic; that stretch reads QIIVTVLRIPSAAGKWK. A helical transmembrane segment spans residues 238–260; the sequence is AFSTCGSHLTVVVLFYGSVIYVY. The Extracellular portion of the chain corresponds to 261 to 273; that stretch reads FRPLSMYSVMKGR. A helical membrane pass occupies residues 274-293; sequence VATVMYTVVTPMLNPFIYSL. The Cytoplasmic portion of the chain corresponds to 294–311; it reads RNKDMKRGLKKLRHRIYS.

It belongs to the G-protein coupled receptor 1 family.

The protein localises to the cell membrane. Odorant receptor. The polypeptide is Olfactory receptor 1L4 (OR1L4) (Homo sapiens (Human)).